The primary structure comprises 810 residues: Transducer protein CosT (810 aa).

Residues 1–38 lie on the Cytoplasmic side of the membrane; the sequence is MSEPTADAGDNSPSSTDTAPLDRVKAIALLPLRSYLVK. A helical transmembrane segment spans residues 39–59; it reads FAVALLVILVIIAAGGFWVQA. Residues 60 to 323 are Extracellular-facing; the sequence is DATATLEANT…AFALSNQIRT (264 aa). The chain crosses the membrane as a helical span at residues 324 to 344; the sequence is GILGFILVALVGVVLVGGTIG. The HAMP 1 domain occupies 345–397; sequence RNTAAAVQSLSAAAAEIEAGNYDVDVASSRRDEIGQLFASIGSMRDALVTQID. Residues 345–810 lie on the Cytoplasmic side of the membrane; the sequence is RNTAAAVQSL…DRDVTPTQTD (466 aa). Positions 403–427 are disordered; that stretch reads REQATEAQQDAEAERERAEDARERA. Over residues 414 to 427 the composition is skewed to basic and acidic residues; sequence EAERERAEDARERA. Residues 439–493 form the HAMP 2 domain; it reads AELEAQAERYSDVMAACADGDLTRRMPADDTDNEAMAAIAASFNEMLAQWEHTII. In terms of domain architecture, Methyl-accepting transducer spans 512 to 748; sequence GAADAERASG…EAVSMTEEVA (237 aa). 2 positions are modified to glutamate methyl ester (Glu): Glu556 and Glu739. Residues 751 to 784 form a disordered region; it reads SDSTAGEAQSVSAAAEEQAASMSEISDSVESLSG. The segment covering 755–774 has biased composition (low complexity); the sequence is AGEAQSVSAAAEEQAASMSE. The segment covering 775–784 has biased composition (polar residues); the sequence is ISDSVESLSG.

This sequence belongs to the methyl-accepting chemotaxis (MCP) protein family. Post-translationally, methylated by CheR.

It is found in the cell membrane. Functionally, mediates chemotaxis towards compatible osmolytes. Probably transduces the signal from the substrate-binding protein CosB to the histidine kinase CheA. The chain is Transducer protein CosT (cosT) from Halobacterium salinarum (strain ATCC 700922 / JCM 11081 / NRC-1) (Halobacterium halobium).